The following is a 253-amino-acid chain: Imidazole glycerol phosphate synthase subunit HisF (253 aa).

Catalysis depends on residues Asp-11 and Asp-130.

The protein belongs to the HisA/HisF family. Heterodimer of HisH and HisF.

The protein resides in the cytoplasm. It carries out the reaction 5-[(5-phospho-1-deoxy-D-ribulos-1-ylimino)methylamino]-1-(5-phospho-beta-D-ribosyl)imidazole-4-carboxamide + L-glutamine = D-erythro-1-(imidazol-4-yl)glycerol 3-phosphate + 5-amino-1-(5-phospho-beta-D-ribosyl)imidazole-4-carboxamide + L-glutamate + H(+). Its pathway is amino-acid biosynthesis; L-histidine biosynthesis; L-histidine from 5-phospho-alpha-D-ribose 1-diphosphate: step 5/9. Functionally, IGPS catalyzes the conversion of PRFAR and glutamine to IGP, AICAR and glutamate. The HisF subunit catalyzes the cyclization activity that produces IGP and AICAR from PRFAR using the ammonia provided by the HisH subunit. The polypeptide is Imidazole glycerol phosphate synthase subunit HisF (Paracoccus denitrificans (strain Pd 1222)).